Here is a 210-residue protein sequence, read N- to C-terminus: Protein SgcE (210 aa).

Residue serine 6 participates in substrate binding. A divalent metal cation is bound by residues histidine 31, aspartate 33, and histidine 64. Aspartate 33 functions as the Proton acceptor in the catalytic mechanism. Substrate is bound by residues histidine 64, aspartate 140–glycine 143, aspartate 169–glycine 171, and glycine 191–arginine 192. Aspartate 169 contacts a divalent metal cation. Aspartate 169 (proton donor) is an active-site residue.

The protein belongs to the ribulose-phosphate 3-epimerase family. Co(2+) serves as cofactor. It depends on Fe(2+) as a cofactor. The cofactor is Mn(2+). Zn(2+) is required as a cofactor.

It functions in the pathway carbohydrate degradation. In terms of biological role, probable pentose-5-phosphate 3-epimerase. This Escherichia coli (strain K12) protein is Protein SgcE (sgcE).